The following is a 211-amino-acid chain: Thiamine-phosphate synthase (211 aa).

Residues 41 to 45 and asparagine 73 each bind 4-amino-2-methyl-5-(diphosphooxymethyl)pyrimidine; that span reads QYRDK. Aspartate 74 and aspartate 93 together coordinate Mg(2+). Threonine 112 contacts 4-amino-2-methyl-5-(diphosphooxymethyl)pyrimidine. Position 139-141 (139-141) interacts with 2-[(2R,5Z)-2-carboxy-4-methylthiazol-5(2H)-ylidene]ethyl phosphate; sequence SPT. Lysine 142 contacts 4-amino-2-methyl-5-(diphosphooxymethyl)pyrimidine. Residues glycine 169 and 189–190 each bind 2-[(2R,5Z)-2-carboxy-4-methylthiazol-5(2H)-ylidene]ethyl phosphate; that span reads VS.

The protein belongs to the thiamine-phosphate synthase family. The cofactor is Mg(2+).

It carries out the reaction 2-[(2R,5Z)-2-carboxy-4-methylthiazol-5(2H)-ylidene]ethyl phosphate + 4-amino-2-methyl-5-(diphosphooxymethyl)pyrimidine + 2 H(+) = thiamine phosphate + CO2 + diphosphate. The enzyme catalyses 2-(2-carboxy-4-methylthiazol-5-yl)ethyl phosphate + 4-amino-2-methyl-5-(diphosphooxymethyl)pyrimidine + 2 H(+) = thiamine phosphate + CO2 + diphosphate. It catalyses the reaction 4-methyl-5-(2-phosphooxyethyl)-thiazole + 4-amino-2-methyl-5-(diphosphooxymethyl)pyrimidine + H(+) = thiamine phosphate + diphosphate. It participates in cofactor biosynthesis; thiamine diphosphate biosynthesis; thiamine phosphate from 4-amino-2-methyl-5-diphosphomethylpyrimidine and 4-methyl-5-(2-phosphoethyl)-thiazole: step 1/1. Condenses 4-methyl-5-(beta-hydroxyethyl)thiazole monophosphate (THZ-P) and 2-methyl-4-amino-5-hydroxymethyl pyrimidine pyrophosphate (HMP-PP) to form thiamine monophosphate (TMP). The polypeptide is Thiamine-phosphate synthase (Thioalkalivibrio sulfidiphilus (strain HL-EbGR7)).